The chain runs to 158 residues: Succinate dehydrogenase assembly factor 2, mitochondrial (158 aa).

Residues 1–23 (MLRQLLATARRLLLPLATPKRCL) constitute a mitochondrion transit peptide.

This sequence belongs to the SDHAF2 family. As to quaternary structure, interacts with the flavoprotein subunit within the SDH catalytic dimer.

Its subcellular location is the mitochondrion matrix. Plays an essential role in the assembly of succinate dehydrogenase (SDH), an enzyme complex (also referred to as respiratory complex II) that is a component of both the tricarboxylic acid (TCA) cycle and the mitochondrial electron transport chain, and which couples the oxidation of succinate to fumarate with the reduction of ubiquinone (coenzyme Q) to ubiquinol. Required for flavinylation (covalent attachment of FAD) of the flavoprotein subunit of the SDH catalytic dimer. The sequence is that of Succinate dehydrogenase assembly factor 2, mitochondrial from Drosophila virilis (Fruit fly).